The following is a 400-amino-acid chain: Dual-specificity RNA methyltransferase RlmN (400 aa).

Glu125 acts as the Proton acceptor in catalysis. Residues 131-372 (ETDRGTLCVS…VRTPRGRDIL (242 aa)) form the Radical SAM core domain. A disulfide bridge links Cys138 with Cys375. Residues Cys145, Cys149, and Cys152 each contribute to the [4Fe-4S] cluster site. S-adenosyl-L-methionine contacts are provided by residues 201–202 (GE), Ser233, 255–257 (SLH), and Asn332. Cys375 functions as the S-methylcysteine intermediate in the catalytic mechanism.

Belongs to the radical SAM superfamily. RlmN family. The cofactor is [4Fe-4S] cluster.

The protein localises to the cytoplasm. It carries out the reaction adenosine(2503) in 23S rRNA + 2 reduced [2Fe-2S]-[ferredoxin] + 2 S-adenosyl-L-methionine = 2-methyladenosine(2503) in 23S rRNA + 5'-deoxyadenosine + L-methionine + 2 oxidized [2Fe-2S]-[ferredoxin] + S-adenosyl-L-homocysteine. The enzyme catalyses adenosine(37) in tRNA + 2 reduced [2Fe-2S]-[ferredoxin] + 2 S-adenosyl-L-methionine = 2-methyladenosine(37) in tRNA + 5'-deoxyadenosine + L-methionine + 2 oxidized [2Fe-2S]-[ferredoxin] + S-adenosyl-L-homocysteine. In terms of biological role, specifically methylates position 2 of adenine 2503 in 23S rRNA and position 2 of adenine 37 in tRNAs. m2A2503 modification seems to play a crucial role in the proofreading step occurring at the peptidyl transferase center and thus would serve to optimize ribosomal fidelity. The chain is Dual-specificity RNA methyltransferase RlmN from Bradyrhizobium diazoefficiens (strain JCM 10833 / BCRC 13528 / IAM 13628 / NBRC 14792 / USDA 110).